The following is a 105-amino-acid chain: UPF0145 protein OEOE_0637 (105 aa).

The protein belongs to the UPF0145 family.

The polypeptide is UPF0145 protein OEOE_0637 (Oenococcus oeni (strain ATCC BAA-331 / PSU-1)).